The following is a 427-amino-acid chain: Glutamate-1-semialdehyde 2,1-aminomutase (427 aa).

Lys-267 bears the N6-(pyridoxal phosphate)lysine mark.

It belongs to the class-III pyridoxal-phosphate-dependent aminotransferase family. HemL subfamily. Homodimer. Pyridoxal 5'-phosphate is required as a cofactor.

The protein resides in the cytoplasm. The catalysed reaction is (S)-4-amino-5-oxopentanoate = 5-aminolevulinate. The protein operates within porphyrin-containing compound metabolism; protoporphyrin-IX biosynthesis; 5-aminolevulinate from L-glutamyl-tRNA(Glu): step 2/2. This is Glutamate-1-semialdehyde 2,1-aminomutase from Citrifermentans bemidjiense (strain ATCC BAA-1014 / DSM 16622 / JCM 12645 / Bem) (Geobacter bemidjiensis).